The following is a 415-amino-acid chain: Vascular endothelial growth factor C (415 aa).

The signal sequence occupies residues 1 to 31 (MHLLCFLSLACSLLAAALIPSPREAPATVAA). Positions 32 to 107 (FESGLGFSEA…RTGDSVKFAA (76 aa)) are excised as a propeptide. 3 disulfides stabilise this stretch: cysteine 127/cysteine 169, cysteine 158/cysteine 205, and cysteine 162/cysteine 207. N-linked (GlcNAc...) asparagine glycosylation is found at asparagine 171, asparagine 201, and asparagine 236. A propeptide spanning residues 224–415 (SLPATLPQCQ…PSYWKRPHLN (192 aa)) is cleaved from the precursor. Tandem repeats lie at residues 276–291 (CGPNKELDEDTCQCVC), 300–315 (CGPHKELDRDSCQCVC), 324–339 (CGANREFDENTCQCVC), and 343–358 (CPRNQPLNPGKCACEC). The 4 X 16 AA repeats of C-X(10)-C-X-C-X(1,3)-C stretch occupies residues 276 to 358 (CGPNKELDED…LNPGKCACEC (83 aa)).

Belongs to the PDGF/VEGF growth factor family. Homodimer; non-covalent and antiparallel. Interacts with FLT4/VEGFR3; the interaction is required for FLT4/VEGFR3 homodimarization and activation. Post-translationally, undergoes a complex proteolytic maturation which generates a variety of processed secreted forms with increased activity toward VEGFR-3, but only the fully processed form could activate VEGFR-2. VEGF-C first form an antiparallel homodimer linked by disulfide bonds. Before secretion, a cleavage occurs between Arg-223 and Ser-224 producing a heterotetramer. The next extracellular step of the processing removes the N-terminal propeptide. Finally the mature VEGF-C is composed mostly of two VEGF homology domains (VHDs) bound by non-covalent interactions. Expressed in adult heart, brain, spleen, lung, liver, skeletal muscle, kidney, testis and intestine with higher levels in heart, brain and kidney. Isoform 4 levels are very low. Isoform 3 is mostly expressed in liver and has reduced expression level in other tissues. Isoform 2 is mostly expressed in brain and kidney, although a lower level expression in other tissues is also detectable.

It is found in the secreted. In terms of biological role, growth factor active in angiogenesis, and endothelial cell growth, stimulating their proliferation and migration and also has effects on the permeability of blood vessels. May function in angiogenesis of the venous and lymphatic vascular systems during embryogenesis, and also in the maintenance of differentiated lymphatic endothelium in adults. Binds and activates KDR/VEGFR2 and FLT4/VEGFR3 receptors. The protein is Vascular endothelial growth factor C (Vegfc) of Mus musculus (Mouse).